The primary structure comprises 298 residues: Aspartate carbamoyltransferase catalytic subunit (298 aa).

The carbamoyl phosphate site is built by Arg50 and Thr51. Lys79 is a binding site for L-aspartate. Positions 100, 128, and 131 each coordinate carbamoyl phosphate. The L-aspartate site is built by Arg160 and Arg221. Carbamoyl phosphate is bound by residues Leu260 and Pro261.

It belongs to the aspartate/ornithine carbamoyltransferase superfamily. ATCase family. As to quaternary structure, heterooligomer of catalytic and regulatory chains.

It catalyses the reaction carbamoyl phosphate + L-aspartate = N-carbamoyl-L-aspartate + phosphate + H(+). The protein operates within pyrimidine metabolism; UMP biosynthesis via de novo pathway; (S)-dihydroorotate from bicarbonate: step 2/3. Its function is as follows. Catalyzes the condensation of carbamoyl phosphate and aspartate to form carbamoyl aspartate and inorganic phosphate, the committed step in the de novo pyrimidine nucleotide biosynthesis pathway. This chain is Aspartate carbamoyltransferase catalytic subunit, found in Methanoculleus marisnigri (strain ATCC 35101 / DSM 1498 / JR1).